A 185-amino-acid chain; its full sequence is Segregation and condensation protein B (185 aa).

The protein belongs to the ScpB family. In terms of assembly, homodimer. Homodimerization may be required to stabilize the binding of ScpA to the Smc head domains. Component of a cohesin-like complex composed of ScpA, ScpB and the Smc homodimer, in which ScpA and ScpB bind to the head domain of Smc. The presence of the three proteins is required for the association of the complex with DNA.

It localises to the cytoplasm. Functionally, participates in chromosomal partition during cell division. May act via the formation of a condensin-like complex containing Smc and ScpA that pull DNA away from mid-cell into both cell halves. This Alkaliphilus oremlandii (strain OhILAs) (Clostridium oremlandii (strain OhILAs)) protein is Segregation and condensation protein B.